Reading from the N-terminus, the 720-residue chain is MFNYFRKELDLGGRTLVLETGKIARQADGAVLARLGDTIVLCTAVGAKSAKAGQDFFPLTVNYQEKAFAAGKIPGGFFKREGRPSEHETLVSRLIDRPIRPLFPEGFYNEVQVIATVLSHDMENDPDIVALIGCSAALTLSGIPFFGPVAASRVGLVNGAFVLNPTLEQRAESKLDLVVAGTAEGVLMVESEAEELSEDQMLAAVEFGHKGFQPVIDAIIALAEHAARDPWTLPEQNPEHVALKQRLNEAGRTLLGNAYQEKVKQLRQEKISAAKKQIIETLGIGGTPEESIAKSMLKDLEADIVRNAILDTGIRIDGRDTRTVRPIIGEVGILPRAHGSALFTRGETQALCVATLGTGQDEQVVDALTGEYRSHFMLHYNFPPYSVGEAGRMGSPGRREIGHGKLAWRAVHPVLPAKDAFPYTLRVVSEITESNGSSSMATVCGSSLALMDAGVPLKRPVAGIAMGLIKEDRAFAVLSDILGDEDHLGDMDFKVAGTEQGVTSLQMDIKITSITTEIMRIALQQARDGRMHILGEMAKAITGARGSVAATAPRITVINVPKEKIREVIGTGGKVIREIVEFSGAKIDIEDDGTIKIASTSEESTQKAIDRIQGIVAEPEVGKIYNGKVVKTADFGAFVNFLGSRDGLVHISELQQGRVNKTSDVINVGDVVKVKVLGFDDRGKVKLSMRLVDQTTGEDISDKVGPKGGRGGRGEGDLAE.

Mg(2+) contacts are provided by D486 and D492. Positions 553–612 constitute a KH domain; that stretch reads PRITVINVPKEKIREVIGTGGKVIREIVEFSGAKIDIEDDGTIKIASTSEESTQKAIDRI. One can recognise an S1 motif domain in the interval 622-690; the sequence is GKIYNGKVVK…DRGKVKLSMR (69 aa). Residues 698-720 are disordered; sequence EDISDKVGPKGGRGGRGEGDLAE.

Belongs to the polyribonucleotide nucleotidyltransferase family. Mg(2+) serves as cofactor.

Its subcellular location is the cytoplasm. The enzyme catalyses RNA(n+1) + phosphate = RNA(n) + a ribonucleoside 5'-diphosphate. Functionally, involved in mRNA degradation. Catalyzes the phosphorolysis of single-stranded polyribonucleotides processively in the 3'- to 5'-direction. This is Polyribonucleotide nucleotidyltransferase from Granulibacter bethesdensis (strain ATCC BAA-1260 / CGDNIH1).